The following is a 1480-amino-acid chain: DNA polymerase zeta catalytic subunit (1480 aa).

The tract at residues 403 to 488 is disordered; it reads DRSKFPKSPL…GDTRKAGKRL (86 aa). The span at 411–427 shows a compositional bias: polar residues; it reads PLNSSQEVTIHSSQDRQ. Basic and acidic residues predominate over residues 457–468; the sequence is TKREIEFCRDLP. Residues 470–479 are compositionally biased toward polar residues; it reads RPTSSEPNQG. Zn(2+) contacts are provided by cysteine 1381, cysteine 1384, cysteine 1400, and cysteine 1403. The CysA-type zinc-finger motif lies at 1381–1403; that stretch reads CSSCLKNNIEIIPDKINSLCSDC. 4 residues coordinate [4Fe-4S] cluster: cysteine 1432, cysteine 1435, cysteine 1446, and cysteine 1451. The CysB motif motif lies at 1432–1451; sequence CRGCSKLSSSDPVLCKSNSC.

This sequence belongs to the DNA polymerase type-B family. As to quaternary structure, forms DNA polymerase zeta with rev7. The cofactor is [4Fe-4S] cluster.

The protein resides in the mitochondrion. It is found in the nucleus. It catalyses the reaction DNA(n) + a 2'-deoxyribonucleoside 5'-triphosphate = DNA(n+1) + diphosphate. Functionally, nonessential DNA polymerase. Required for DNA damage induced mutagenesis. Involved in DNA repair, mitochondrial DNA repair and translesion synthesis. Has a role in the bypass of abasic (AP) sites. The chain is DNA polymerase zeta catalytic subunit (rev3) from Schizosaccharomyces pombe (strain 972 / ATCC 24843) (Fission yeast).